The sequence spans 904 residues: MICAL-like protein 2 (904 aa).

Residues 1–107 (MAAIRALQQW…YVSQYYNYFH (107 aa)) form the Calponin-homology (CH) domain. Residues 1–260 (MAAIRALQQW…KLTGLVPRQP (260 aa)) form a forms an intramolecular interaction with the C-terminal coiled coil domain keeping the protein in a closed conformation region. A phosphoserine mark is found at Ser-110, Ser-143, and Ser-153. The disordered stretch occupies residues 117–178 (GVKRASEDSE…GGPPPKTDQA (62 aa)). Residues 143 to 153 (SPAPARKPPLS) are compositionally biased toward pro residues. The LIM zinc-binding domain maps to 186–248 (STCGVCGKHV…TSHLPAAASA (63 aa)). A Phosphoserine modification is found at Ser-249. Residues 251-722 (KLTGLVPRQP…PANVPALPGE (472 aa)) form a disordered region. The necessary and sufficient for interaction with actinins stretch occupies residues 261-388 (GAMGVDSRTS…GGAPRVAAPQ (128 aa)). The mediates targeting to the cell plasma membrane stretch occupies residues 261–697 (GAMGVDSRTS…EARVQSWKEE (437 aa)). Over residues 267–277 (SRTSCSPQKAQ) the composition is skewed to polar residues. 2 stretches are compositionally biased toward low complexity: residues 293-314 (NSPARASVPAAPNPAATSATSV) and 349-362 (SSAAPCTAAAASHP). Phosphoserine is present on Ser-294. Positions 363-374 (AVPPSAPDPRPA) are enriched in pro residues. Positions 385–400 (AAPQTTLSSSSTSAAT) are enriched in low complexity. The span at 408–433 (PSASRTQQARNKFFQTSAVPPGTSLS) shows a compositional bias: polar residues. A compositionally biased stretch (low complexity) spans 459–480 (ALSALEEAGAPAPGRPSPATAA). Ser-494 and Ser-504 each carry phosphoserine. Composition is skewed to low complexity over residues 520–534 (LSTSSTSQASALPPA) and 542–553 (SSGVGRVGAGSR). Residues 564–578 (KSTTLTQDMSTSLQE) are compositionally biased toward polar residues. Over residues 593-622 (PVDRRSPAERTLKPKEPRALAEPRAGEAPR) the composition is skewed to basic and acidic residues. Phosphoserine is present on Ser-598. Thr-644 is modified (phosphothreonine). Positions 647 to 661 (PASPGPSLPARSPSP) are enriched in pro residues. Ser-649, Ser-658, Ser-660, and Ser-726 each carry phosphoserine. The interval 698 to 807 (EKKPHLQGKP…LMYKSKAQRL (110 aa)) is forms an intramolecular interaction with the N-terminal Calponin-homology and LIM zinc-binding domains-containing region keeping the protein in a closed conformation. Residues 723–874 (TVTSPVRLHP…EQEEDQMLRD (152 aa)) form the bMERB domain. Residues 735 to 771 (LSPEEIQRQLQDIERRLDALELRGVELEKRLRAAEGD) adopt a coiled-coil conformation. The tract at residues 807-903 (LEEQQLDIEG…WSPKSKSSPS (97 aa)) is mediates interaction with RAB13 and is required for transition from the closed to the opened conformation.

Interacts with RAB13 (GTP-bound form); competes with RAB8A and is involved in tight junctions assembly. Interacts with RAB8A; competes with RAB13 and is involved in E-cadherin endocytic recycling. Interacts with RAB8B. Interacts (preferentially in opened conformation) with ACTN1 and ACTN4; stimulated by RAB13 activation. Interacts (via calponin-homology (CH) domain) with the filamins FLNA, FLNB and FLNC (via actin-binding domain).

It is found in the cell membrane. The protein resides in the cell junction. The protein localises to the tight junction. Its subcellular location is the recycling endosome. It localises to the cell projection. It is found in the cytoplasm. The protein resides in the cytoskeleton. Functionally, effector of small Rab GTPases which is involved in junctional complexes assembly through the regulation of cell adhesion molecules transport to the plasma membrane and actin cytoskeleton reorganization. Regulates the endocytic recycling of occludins, claudins and E-cadherin to the plasma membrane and may thereby regulate the establishment of tight junctions and adherens junctions. In parallel, may regulate actin cytoskeleton reorganization directly through interaction with F-actin or indirectly through actinins and filamins. Most probably involved in the processes of epithelial cell differentiation, cell spreading and neurite outgrowth. Undergoes liquid-liquid phase separation to form tubular recycling endosomes. Plays 2 sequential roles in the biogenesis of tubular recycling endosomes: first organizes phase separation and then the closed form formed by interaction with RAB8A promotes endosomal tubulation. This chain is MICAL-like protein 2, found in Homo sapiens (Human).